The following is a 482-amino-acid chain: ATP synthase subunit beta (482 aa).

161 to 168 (GGAGVGKT) serves as a coordination point for ATP.

The protein belongs to the ATPase alpha/beta chains family. In terms of assembly, F-type ATPases have 2 components, CF(1) - the catalytic core - and CF(0) - the membrane proton channel. CF(1) has five subunits: alpha(3), beta(3), gamma(1), delta(1), epsilon(1). CF(0) has four main subunits: a(1), b(1), b'(1) and c(9-12).

Its subcellular location is the cellular thylakoid membrane. It catalyses the reaction ATP + H2O + 4 H(+)(in) = ADP + phosphate + 5 H(+)(out). Its function is as follows. Produces ATP from ADP in the presence of a proton gradient across the membrane. The catalytic sites are hosted primarily by the beta subunits. This Microcystis aeruginosa (strain NIES-843 / IAM M-2473) protein is ATP synthase subunit beta.